A 172-amino-acid polypeptide reads, in one-letter code: 6,7-dimethyl-8-ribityllumazine synthase (172 aa).

5-amino-6-(D-ribitylamino)uracil-binding positions include F22 and 56–58; that span reads AFE. 78–79 serves as a coordination point for (2S)-2-hydroxy-3-oxobutyl phosphate; sequence LG. 80–82 is a 5-amino-6-(D-ribitylamino)uracil binding site; that stretch reads AII. H88 (proton donor) is an active-site residue. Position 113 (F113) interacts with 5-amino-6-(D-ribitylamino)uracil. R127 contacts (2S)-2-hydroxy-3-oxobutyl phosphate.

The protein belongs to the DMRL synthase family.

It catalyses the reaction (2S)-2-hydroxy-3-oxobutyl phosphate + 5-amino-6-(D-ribitylamino)uracil = 6,7-dimethyl-8-(1-D-ribityl)lumazine + phosphate + 2 H2O + H(+). It functions in the pathway cofactor biosynthesis; riboflavin biosynthesis; riboflavin from 2-hydroxy-3-oxobutyl phosphate and 5-amino-6-(D-ribitylamino)uracil: step 1/2. Its function is as follows. Catalyzes the formation of 6,7-dimethyl-8-ribityllumazine by condensation of 5-amino-6-(D-ribitylamino)uracil with 3,4-dihydroxy-2-butanone 4-phosphate. This is the penultimate step in the biosynthesis of riboflavin. The sequence is that of 6,7-dimethyl-8-ribityllumazine synthase from Protochlamydia amoebophila (strain UWE25).